Consider the following 233-residue polypeptide: Uridylate kinase (233 aa).

Residues 9 to 12, Gly51, and Arg55 each bind ATP; that span reads KLSG. UMP-binding positions include Asp69 and 130 to 137; that span reads TGNPFFST. ATP is bound by residues Asn158, Tyr164, and Asp167.

The protein belongs to the UMP kinase family. In terms of assembly, homohexamer.

It is found in the cytoplasm. It catalyses the reaction UMP + ATP = UDP + ADP. It participates in pyrimidine metabolism; CTP biosynthesis via de novo pathway; UDP from UMP (UMPK route): step 1/1. Its activity is regulated as follows. Inhibited by UTP. Functionally, catalyzes the reversible phosphorylation of UMP to UDP. The protein is Uridylate kinase of Thermus thermophilus (strain ATCC BAA-163 / DSM 7039 / HB27).